An 816-amino-acid polypeptide reads, in one-letter code: Fibroblast growth factor receptor (816 aa).

The first 19 residues, 1–19, serve as a signal peptide directing secretion; it reads MISDWCVVLVLLMSRLVFG. The Extracellular portion of the chain corresponds to 20–370; sequence LNFTEPVNYI…YKEESVEKTV (351 aa). N-linked (GlcNAc...) asparagine glycosylation is found at Asn21, Asn69, Asn119, Asn156, Asn171, Asn244, Asn274, Asn313, and Asn321. An Ig-like C2-type 1 domain is found at 25-105; it reads PVNYILKLGE…VTAMNEESVQ (81 aa). A disulfide bridge links Cys43 with Cys94. The Ig-like C2-type 2 domain occupies 126-217; that stretch reads LRIKNDISLL…GKIEHIMTVE (92 aa). Cys147 and Cys201 are disulfide-bonded. Residues 371–391 form a helical membrane-spanning segment; it reads IFIVITSMLAGLIFVAFVIFF. Topologically, residues 392 to 816 are cytoplasmic; the sequence is ICRVRSKDKF…DILLSHYAVS (425 aa). Residues 474–747 form the Protein kinase domain; the sequence is LETDCLLGEG…QLIEDLERML (274 aa). Residues 480–488 and Lys508 each bind ATP; that span reads LGEGAFGRV. Residue Asp612 is the Proton acceptor of the active site. A Phosphotyrosine; by autocatalysis modification is found at Tyr643.

Belongs to the protein kinase superfamily. Tyr protein kinase family. Fibroblast growth factor receptor subfamily.

The protein localises to the membrane. It carries out the reaction L-tyrosyl-[protein] + ATP = O-phospho-L-tyrosyl-[protein] + ADP + H(+). In terms of biological role, receptor for basic fibroblast growth factor. This chain is Fibroblast growth factor receptor (FGFR), found in Hydra vulgaris (Hydra).